The following is a 276-amino-acid chain: Cytoskeleton protein RodZ (276 aa).

At Met-1–Ser-110 the chain is on the cytoplasmic side. Residues Phe-111 to Tyr-131 traverse the membrane as a helical; Signal-anchor for type II membrane protein segment. Residues Val-132 to Asn-276 are Extracellular-facing.

This sequence belongs to the RodZ family. Interacts with MltG and MreC in the elongasome. Interacts with KhpB (also called EloR/Jag).

The protein resides in the cell membrane. Its function is as follows. Cytoskeletal protein that is involved in cell-shape control through regulation of the length of the long axis. Probably part of the elongasome which synthesizes peripheral peptidoglycan. This Streptococcus pneumoniae (strain ATCC BAA-255 / R6) protein is Cytoskeleton protein RodZ.